The sequence spans 316 residues: Ribosomal protein L11 methyltransferase (316 aa).

Positions 157, 178, 200, and 243 each coordinate S-adenosyl-L-methionine.

Belongs to the methyltransferase superfamily. PrmA family.

It localises to the cytoplasm. It catalyses the reaction L-lysyl-[protein] + 3 S-adenosyl-L-methionine = N(6),N(6),N(6)-trimethyl-L-lysyl-[protein] + 3 S-adenosyl-L-homocysteine + 3 H(+). Its function is as follows. Methylates ribosomal protein L11. The polypeptide is Ribosomal protein L11 methyltransferase (Streptococcus pneumoniae (strain Hungary19A-6)).